A 369-amino-acid chain; its full sequence is Anhydro-N-acetylmuramic acid kinase (369 aa).

Position 12-19 (12-19) interacts with ATP; it reads GTSLDGVD.

This sequence belongs to the anhydro-N-acetylmuramic acid kinase family.

The catalysed reaction is 1,6-anhydro-N-acetyl-beta-muramate + ATP + H2O = N-acetyl-D-muramate 6-phosphate + ADP + H(+). It functions in the pathway amino-sugar metabolism; 1,6-anhydro-N-acetylmuramate degradation. It participates in cell wall biogenesis; peptidoglycan recycling. Its function is as follows. Catalyzes the specific phosphorylation of 1,6-anhydro-N-acetylmuramic acid (anhMurNAc) with the simultaneous cleavage of the 1,6-anhydro ring, generating MurNAc-6-P. Is required for the utilization of anhMurNAc either imported from the medium or derived from its own cell wall murein, and thus plays a role in cell wall recycling. The sequence is that of Anhydro-N-acetylmuramic acid kinase from Escherichia coli O139:H28 (strain E24377A / ETEC).